A 1048-amino-acid polypeptide reads, in one-letter code: 3-hydroxy-3-methylglutaryl-coenzyme A reductase (1048 aa).

Residues 1 to 32 (MDPVVKKPSPGGVQHRVTKGLRAIVGHACRHP) lie on the Cytoplasmic side of the membrane. A helical transmembrane segment spans residues 33–53 (IHTLLVTALTAATTHLHVLEG). Residues 54-220 (TYQAAHRGLA…FLHRVKHAET (167 aa)) are Lumenal-facing. Residues 221–241 (VDLVIIGLSYLAMNMTVVSLF) traverse the membrane as a helical segment. One can recognise an SSD domain in the interval 222–403 (DLVIIGLSYL…FTFYATILCV (182 aa)). The Cytoplasmic portion of the chain corresponds to 242-250 (RVMRQLGSR). The chain crosses the membrane as a helical span at residues 251–271 (FWLATSVLLSGAFAFVLGLGI). Topologically, residues 272–276 (TTTCD) are lumenal. Residues 277 to 297 (VPVDMLLLFEGIPYLVLTVGF) form a helical membrane-spanning segment. The Cytoplasmic segment spans residues 298 to 348 (EKPIQLTRAVLCVSEELRGGWQRPVPNGASSDDSRQSQLIPNIIQLAVDRE). A helical membrane pass occupies residues 349–369 (GWYIVRSYLLEIGALALGAVL). The Lumenal segment spans residues 370–377 (RPNDSLGH). Asn-372 is a glycosylation site (N-linked (GlcNAc...) asparagine). A helical transmembrane segment spans residues 378-398 (FCFLAAWTLLIDAILLFTFYA). Residues 399–439 (TILCVKLEITRIRSPGGLGQVNAKHPSGIFGHKVKSTNITW) are Cytoplasmic-facing. A helical transmembrane segment spans residues 440–460 (WKLLTVGGFVLCHFLQLSPFF). At 461–542 (YRVMGEYMAN…LDGLESPLGR (82 aa)) the chain is on the lumenal side. Asn-470 and Asn-520 each carry an N-linked (GlcNAc...) asparagine glycan. The helical transmembrane segment at 543-563 (LCLMGALVVSLVLNNHLIHAA) threads the bilayer. Topologically, residues 564–1048 (RWHAWPQARE…NRSAGATVKK (485 aa)) are cytoplasmic. The active-site Charge relay system is Glu-729. 735 to 741 (SASRGCK) contributes to the CoA binding site. Residues 796–798 (SRF) and 823–831 (DAMGMNMIS) contribute to the NADP(+) site. Catalysis depends on Lys-863, which acts as the Charge relay system. 892–894 (VLK) lines the CoA pocket. The active-site Charge relay system is the Asp-939. 1034–1035 (AH) is a binding site for CoA. His-1035 (proton donor) is an active-site residue. 1039-1040 (NR) lines the NADP(+) pocket.

This sequence belongs to the HMG-CoA reductase family.

The protein resides in the endoplasmic reticulum membrane. The enzyme catalyses (R)-mevalonate + 2 NADP(+) + CoA = (3S)-3-hydroxy-3-methylglutaryl-CoA + 2 NADPH + 2 H(+). It functions in the pathway metabolic intermediate biosynthesis; (R)-mevalonate biosynthesis; (R)-mevalonate from acetyl-CoA: step 3/3. In terms of biological role, HMG-CoA reductase; part of the first module of ergosterol biosynthesis pathway that includes the early steps of the pathway, conserved across all eukaryotes, and which results in the formation of mevalonate from acetyl-coenzyme A (acetyl-CoA). In this module, the cytosolic acetyl-CoA acetyltransferase catalyzes the formation of acetoacetyl-CoA. The hydroxymethylglutaryl-CoA synthase then condenses acetyl-CoA with acetoacetyl-CoA to form HMG-CoA. The rate-limiting step of the early module is the reduction to mevalonate by the 3-hydroxy-3-methylglutaryl-coenzyme A (HMG-CoA) reductase. This Aspergillus terreus (strain NIH 2624 / FGSC A1156) protein is 3-hydroxy-3-methylglutaryl-coenzyme A reductase.